Here is a 291-residue protein sequence, read N- to C-terminus: 4-hydroxy-tetrahydrodipicolinate synthase (291 aa).

Position 44 (T44) interacts with pyruvate. The Proton donor/acceptor role is filled by Y132. Catalysis depends on K160, which acts as the Schiff-base intermediate with substrate. Residue I202 coordinates pyruvate.

The protein belongs to the DapA family. As to quaternary structure, homotetramer; dimer of dimers.

The protein localises to the cytoplasm. The enzyme catalyses L-aspartate 4-semialdehyde + pyruvate = (2S,4S)-4-hydroxy-2,3,4,5-tetrahydrodipicolinate + H2O + H(+). It participates in amino-acid biosynthesis; L-lysine biosynthesis via DAP pathway; (S)-tetrahydrodipicolinate from L-aspartate: step 3/4. Catalyzes the condensation of (S)-aspartate-beta-semialdehyde [(S)-ASA] and pyruvate to 4-hydroxy-tetrahydrodipicolinate (HTPA). This is 4-hydroxy-tetrahydrodipicolinate synthase from Parvibaculum lavamentivorans (strain DS-1 / DSM 13023 / NCIMB 13966).